Here is a 620-residue protein sequence, read N- to C-terminus: Glutathione-regulated potassium-efflux system protein KefC (620 aa).

12 helical membrane-spanning segments follow: residues 4–24 (HTLL…PIAV), 26–46 (LGLG…PWGL), 54–74 (SILH…GLEL), 90–110 (GALQ…FLGL), 114–134 (VAEL…MQAM), 149–169 (FAVL…IPLL), 178–198 (LGAF…VVLL), 218–238 (VFSA…EEVG), 270–290 (GLLL…GTLV), 294–314 (LRIL…LWLV), 327–347 (WFAV…GAAQ), and 359–379 (ALTL…VLLT). In terms of domain architecture, RCK N-terminal spans 399 to 518 (QPRVIVAGFG…AGVAMPERET (120 aa)). The interval 599 to 620 (QGTAEGKHSGEVADEPEVKPSI) is disordered.

The protein belongs to the monovalent cation:proton antiporter 2 (CPA2) transporter (TC 2.A.37) family. KefC subfamily. As to quaternary structure, homodimer. Interacts with the regulatory subunit KefF.

The protein resides in the cell inner membrane. Functionally, pore-forming subunit of a potassium efflux system that confers protection against electrophiles. Catalyzes K(+)/H(+) antiport. The protein is Glutathione-regulated potassium-efflux system protein KefC of Salmonella agona (strain SL483).